A 90-amino-acid chain; its full sequence is Large ribosomal subunit protein bL27 (90 aa).

The protein belongs to the bacterial ribosomal protein bL27 family.

This chain is Large ribosomal subunit protein bL27, found in Rhodopseudomonas palustris (strain BisB5).